The chain runs to 547 residues: Chaperonin GroEL (547 aa).

Residues 30–33 (TLGP), K51, 87–91 (DGTTT), G415, and D496 contribute to the ATP site. The segment at 527–547 (SDKEEPMPMRGGMGGMGGMDF) is disordered. The span at 537-547 (GGMGGMGGMDF) shows a compositional bias: gly residues.

This sequence belongs to the chaperonin (HSP60) family. Forms a cylinder of 14 subunits composed of two heptameric rings stacked back-to-back. Interacts with the co-chaperonin GroES.

Its subcellular location is the cytoplasm. It carries out the reaction ATP + H2O + a folded polypeptide = ADP + phosphate + an unfolded polypeptide.. Together with its co-chaperonin GroES, plays an essential role in assisting protein folding. The GroEL-GroES system forms a nano-cage that allows encapsulation of the non-native substrate proteins and provides a physical environment optimized to promote and accelerate protein folding. This chain is Chaperonin GroEL, found in Rickettsia massiliae (strain Mtu5).